The following is a 270-amino-acid chain: MHFMTALRAAWQQRDSLLCVGLDPDPARFPAHLQGRPDAIFEFCAAIVDATADLVCSFKPQIAYFAARRAEDQLEALIDHIHAHHPGVPVILDAKRGDIGSTAEQYAVEAFERFKADAITVNPYMGRDSVDPYLAYPDKGVILLCRTSNPGGSDLQFLDVGGEKLYERVARLVAEDWNASGNCGLVVGATFPAEIARVRALTGEMPLLVPGIGAQGGDIEATVKAGRTAAGGGLMINSSRAILYAGKGEDFAAAARAAALQTRDAINAYR.

The active-site Proton donor is the Lys95.

The protein belongs to the OMP decarboxylase family. Type 2 subfamily.

It carries out the reaction orotidine 5'-phosphate + H(+) = UMP + CO2. It functions in the pathway pyrimidine metabolism; UMP biosynthesis via de novo pathway; UMP from orotate: step 2/2. The sequence is that of Orotidine 5'-phosphate decarboxylase from Azoarcus sp. (strain BH72).